The primary structure comprises 554 residues: Arginine--tRNA ligase (554 aa).

The 'HIGH' region signature appears at 129-139 (ANPTGPLHIGH).

It belongs to the class-I aminoacyl-tRNA synthetase family. Monomer.

Its subcellular location is the cytoplasm. The enzyme catalyses tRNA(Arg) + L-arginine + ATP = L-arginyl-tRNA(Arg) + AMP + diphosphate. This is Arginine--tRNA ligase from Syntrophotalea carbinolica (strain DSM 2380 / NBRC 103641 / GraBd1) (Pelobacter carbinolicus).